An 878-amino-acid polypeptide reads, in one-letter code: MNKDKSKQKPQKKENNNNNNKNNNNNNNKTENNKTNKDFTKNKFDKDAKIDKVDNKKIFHNRSSQKRIAKLKKIELQKKPLTLKLNEIKSIEQRLIDEAPQRGTNPLANISSTTATTTTTTATKNDKEKEKEYKIDYPSATDFKDLPISQLTLKALTESKFLKLTDIQRASLPHTLCGRDILGAAKTGSGKTLSFILPILETLWRNRWGRDDGIGAIVLSPTRELAIQIFDVLKAVGKYHTFSAGLIIGGRNVQQEKDKINAMNILIATPGRLLQHMDETYGFDCSNLKILVLDEADRILDLGFSKCLNSIVENLPRERQTLLFSATQTKSIRDLARLSLQEPEYISVYEKDITTTPQNLTQTLCVIPLEMKLNMLFSFIKTHLTSKIIVFFASCKQVRFAHETFKLLNPGTTLFPLHGKMKQWTRLEVFEDFCKKKAGTLFATDIAARGLDFPAVEWVIQVDCPDDIETYIHRVGRTARNDAPGQSITILLPSEKDGMVNLMEKQKMKFEILEPNPEKLVSIDSKLSSFLSEKTDLKYLAQKSFVSYLRSVYRQSNKEIFKIQELNINEFSKSLGLLGTPNIQFGKASADSKNKSFVVSNIQKQLKDKKSKGEKDIDSSDDDDDDEERNKIGNSDDEDSEDDSDFQDDSDDDNKKVTKQQPKTNIEKLFDRKNANVMSETYQKLRTKEEDEEDDSMFVVKRRDHDLDNLDIVKRLSRKENKEKNFINDPTKLKFQESTSVPKDGKLPTSYIEKVKSEVEKGDVQDKILLKERLKRKKLKLQSKELRKQSGGGATGDDEEESVAYFVPPGEKDPYENGENDSDDESNDDDVWGQEYNSDDDDDDEESESEEQPKPITKKRTLEDHEESALKFLKKNRI.

The span at 1 to 15 shows a compositional bias: basic and acidic residues; that stretch reads MNKDKSKQKPQKKEN. Disordered stretches follow at residues 1–53 and 102–130; these read MNKD…IDKV and RGTN…KEKE. Over residues 16 to 30 the composition is skewed to low complexity; sequence NNNNNKNNNNNNNKT. Over residues 31–53 the composition is skewed to basic and acidic residues; that stretch reads ENNKTNKDFTKNKFDKDAKIDKV. The span at 102–112 shows a compositional bias: polar residues; it reads RGTNPLANISS. Low complexity predominate over residues 113 to 123; the sequence is TTATTTTTTAT. Positions 141–169 match the Q motif motif; sequence TDFKDLPISQLTLKALTESKFLKLTDIQR. Residues 161–163, Gln168, and 185–192 contribute to the ATP site; these read FLK and AKTGSGKT. Residues 172 to 346 form the Helicase ATP-binding domain; that stretch reads LPHTLCGRDI…RLSLQEPEYI (175 aa). Residues 294–297 carry the DEAD box motif; sequence DEAD. The Helicase C-terminal domain occupies 372–521; sequence KLNMLFSFIK…ILEPNPEKLV (150 aa). Residues 608 to 618 are compositionally biased toward basic and acidic residues; that stretch reads DKKSKGEKDID. 2 disordered regions span residues 608–675 and 781–878; these read DKKS…RKNA and LQSK…KNRI. The span at 635–652 shows a compositional bias: acidic residues; the sequence is SDDEDSEDDSDFQDDSDD. A compositionally biased stretch (basic and acidic residues) spans 665 to 674; sequence NIEKLFDRKN. Residues 816 to 850 show a composition bias toward acidic residues; that stretch reads ENGENDSDDESNDDDVWGQEYNSDDDDDDEESESE. A compositionally biased stretch (basic and acidic residues) spans 860-869; the sequence is RTLEDHEESA.

It belongs to the DEAD box helicase family. DDX10/DBP4 subfamily.

The protein resides in the nucleus. It is found in the nucleolus. It catalyses the reaction ATP + H2O = ADP + phosphate + H(+). Its function is as follows. Probable ATP-dependent RNA helicase which may be involved in ribosome biogenesis. This is Probable ATP-dependent RNA helicase ddx10 (ddx10) from Dictyostelium discoideum (Social amoeba).